The sequence spans 161 residues: UPF0506 protein SJCHGC02965 (161 aa).

An N-terminal signal peptide occupies residues 1-13 (QLLILCLVTVINS). 9 N-linked (GlcNAc...) asparagine glycosylation sites follow: Asn-15, Asn-19, Asn-31, Asn-43, Asn-47, Asn-59, Asn-63, Asn-75, and Asn-121. Intrachain disulfides connect Cys-127/Cys-141, Cys-134/Cys-145, and Cys-140/Cys-150.

It belongs to the UPF0506 family.

The protein localises to the secreted. This chain is UPF0506 protein SJCHGC02965, found in Schistosoma japonicum (Blood fluke).